Here is a 296-residue protein sequence, read N- to C-terminus: Deleted in azoospermia-like (296 aa).

Residues 1–18 (MSAANPETPNSTISREAN) show a composition bias toward polar residues. The tract at residues 1–25 (MSAANPETPNSTISREANTQSSSAA) is disordered. Residues 40 to 115 (NTVFVGGIDV…KKLKLGPAIR (76 aa)) enclose the RRM domain. The tract at residues 80 to 132 (KGYGFVSFFNDVDVQKIVESQINFHGKKLKLGPAIRKQNLCAYHVQPRPLVFN) is homodimerization. The DAZ domain maps to 167–190 (AYPPYPNSPVQVITGYQLPVYNYQ). At Tyr277 the chain carries Phosphotyrosine.

It belongs to the RRM DAZ family. Homodimer and heterodimer. Forms a heterodimer with DAZ. Interacts with BOLL, DAZAP1 and DAZAP2. Interacts with PUM2 Multiple DAZL RRMs can bind to a single RNA containing multiple GUU triplets. In terms of tissue distribution, testis specific.

Its subcellular location is the cytoplasm. The protein localises to the nucleus. In terms of biological role, RNA-binding protein, which is essential for gametogenesis in both males and females. Plays a central role during spermatogenesis. Acts by binding to the 3'-UTR of mRNA, specifically recognizing GUU triplets, and thereby regulating the translation of key transcripts. This is Deleted in azoospermia-like (DAZL) from Callithrix jacchus (White-tufted-ear marmoset).